Reading from the N-terminus, the 329-residue chain is Glycerol-3-phosphate dehydrogenase [NAD(P)+] (329 aa).

NADPH contacts are provided by Ser-13, Trp-14, His-34, and Lys-105. 3 residues coordinate sn-glycerol 3-phosphate: Lys-105, Gly-134, and Ser-136. An NADPH-binding site is contributed by Ala-138. Positions 189, 242, 252, 253, and 254 each coordinate sn-glycerol 3-phosphate. Lys-189 serves as the catalytic Proton acceptor. Arg-253 lines the NADPH pocket. The NADPH site is built by Val-277 and Glu-279.

This sequence belongs to the NAD-dependent glycerol-3-phosphate dehydrogenase family.

It is found in the cytoplasm. The catalysed reaction is sn-glycerol 3-phosphate + NAD(+) = dihydroxyacetone phosphate + NADH + H(+). It catalyses the reaction sn-glycerol 3-phosphate + NADP(+) = dihydroxyacetone phosphate + NADPH + H(+). It participates in membrane lipid metabolism; glycerophospholipid metabolism. Catalyzes the reduction of the glycolytic intermediate dihydroxyacetone phosphate (DHAP) to sn-glycerol 3-phosphate (G3P), the key precursor for phospholipid synthesis. This Legionella pneumophila (strain Lens) protein is Glycerol-3-phosphate dehydrogenase [NAD(P)+].